Reading from the N-terminus, the 453-residue chain is GTPase Der (453 aa).

EngA-type G domains are found at residues 3–178 (PKIA…PNNE) and 190–363 (LKLA…LECS). Residues 9–16 (GRPNVGKS), 57–61 (DTGGV), 130–133 (NKVD), 196–203 (GRPNAGKS), 243–247 (DTAGI), and 308–311 (NKTD) each bind GTP. Residues 364-448 (TRINTGVLNR…PIRIRLRSSH (85 aa)) enclose the KH-like domain.

Belongs to the TRAFAC class TrmE-Era-EngA-EngB-Septin-like GTPase superfamily. EngA (Der) GTPase family. As to quaternary structure, associates with the 50S ribosomal subunit.

Functionally, GTPase that plays an essential role in the late steps of ribosome biogenesis. In Lawsonia intracellularis (strain PHE/MN1-00), this protein is GTPase Der.